The following is a 289-amino-acid chain: ATP synthase gamma chain (289 aa).

The protein belongs to the ATPase gamma chain family. In terms of assembly, F-type ATPases have 2 components, CF(1) - the catalytic core - and CF(0) - the membrane proton channel. CF(1) has five subunits: alpha(3), beta(3), gamma(1), delta(1), epsilon(1). CF(0) has three main subunits: a, b and c.

It is found in the cell inner membrane. Its function is as follows. Produces ATP from ADP in the presence of a proton gradient across the membrane. The gamma chain is believed to be important in regulating ATPase activity and the flow of protons through the CF(0) complex. The protein is ATP synthase gamma chain of Herminiimonas arsenicoxydans.